A 171-amino-acid polypeptide reads, in one-letter code: Large ribosomal subunit protein uL10 (171 aa).

This sequence belongs to the universal ribosomal protein uL10 family. Part of the ribosomal stalk of the 50S ribosomal subunit. The N-terminus interacts with L11 and the large rRNA to form the base of the stalk. The C-terminus forms an elongated spine to which L12 dimers bind in a sequential fashion forming a multimeric L10(L12)X complex.

Its function is as follows. Forms part of the ribosomal stalk, playing a central role in the interaction of the ribosome with GTP-bound translation factors. The chain is Large ribosomal subunit protein uL10 from Paracoccus denitrificans (strain Pd 1222).